The following is an 835-amino-acid chain: Replication origin-binding protein (835 aa).

The region spanning 54–215 is the Helicase ATP-binding domain; the sequence is PGMSQTRPVT…SGLRGDENIH (162 aa). 67-74 provides a ligand contact to ATP; that stretch reads APMGSGKT.

The protein belongs to the herpesviridae OriBP family. As to quaternary structure, homodimer. Interacts with the major DNA-binding protein. Interacts with the helicase/primase component 52 and the polymerase accessory protein.

It is found in the host nucleus. Functions as a docking protein to recruit essential components of the viral replication machinery to viral DNA origins. In the presence of the major DNA-binding protein, opens dsDNA leading to a conformational change in the origin that facilitates DNA unwinding and subsequent replication. In Homo sapiens (Human), this protein is Replication origin-binding protein.